Consider the following 817-residue polypeptide: Protein kintoun (817 aa).

4 disordered regions span residues 233–259, 385–404, 410–445, and 473–503; these read AEST…PRCS, AGAR…RKSC, AGTA…TPEN, and VQTS…KPLC. A compositionally biased stretch (basic and acidic residues) spans 386-401; that stretch reads GAREESADSSGADHGR. Phosphoserine is present on residues S622 and S631. The tract at residues 653-692 is disordered; it reads ECSDPDGLQGKEKGVKEECPLSEKENTEHSTTSTADSNSS. Over residues 661–680 the composition is skewed to basic and acidic residues; that stretch reads QGKEKGVKEECPLSEKENTE. Residues 681-692 show a composition bias toward polar residues; it reads HSTTSTADSNSS.

The protein belongs to the PIH1 family. Kintoun subfamily. Interacts with CFAP300. Interacts with DNAI2 and HSPA1A. Interacts with DNAAF4. Interacts with DNAAF6/PIH1D3.

Its subcellular location is the cytoplasm. It localises to the dynein axonemal particle. Its function is as follows. Required for cytoplasmic pre-assembly of axonemal dyneins, thereby playing a central role in motility in cilia and flagella. Involved in pre-assembly of dynein arm complexes in the cytoplasm before intraflagellar transport loads them for the ciliary compartment. The protein is Protein kintoun of Rattus norvegicus (Rat).